The chain runs to 288 residues: Acetyl-coenzyme A carboxylase carboxyl transferase subunit beta, chloroplastic (288 aa).

The region spanning 30–288 (LWIKCFDCGL…QILSLHNHSK (259 aa)) is the CoA carboxyltransferase N-terminal domain. Residues C34, C37, C53, and C56 each coordinate Zn(2+). Residues 34 to 56 (CFDCGLLMYSKVLKRNLKVCPQC) form a C4-type zinc finger.

This sequence belongs to the AccD/PCCB family. As to quaternary structure, acetyl-CoA carboxylase is a heterohexamer composed of biotin carboxyl carrier protein, biotin carboxylase and 2 subunits each of ACCase subunit alpha and ACCase plastid-coded subunit beta (accD). Zn(2+) serves as cofactor.

The protein resides in the plastid. Its subcellular location is the chloroplast stroma. It carries out the reaction N(6)-carboxybiotinyl-L-lysyl-[protein] + acetyl-CoA = N(6)-biotinyl-L-lysyl-[protein] + malonyl-CoA. It functions in the pathway lipid metabolism; malonyl-CoA biosynthesis; malonyl-CoA from acetyl-CoA: step 1/1. Component of the acetyl coenzyme A carboxylase (ACC) complex. Biotin carboxylase (BC) catalyzes the carboxylation of biotin on its carrier protein (BCCP) and then the CO(2) group is transferred by the transcarboxylase to acetyl-CoA to form malonyl-CoA. In Pyropia yezoensis (Susabi-nori), this protein is Acetyl-coenzyme A carboxylase carboxyl transferase subunit beta, chloroplastic.